The following is a 298-amino-acid chain: WRKY transcription factor 22 (298 aa).

2 disordered regions span residues 75-116 (EEPR…IQHK) and 181-220 (AEHNHPAPTHRNSLAGSTRQKPSDQQTSKSPTTTIATYSS). Residues 88–103 (SLSASSGSVTSKPSGS) show a composition bias toward low complexity. The segment covering 107–116 (RSKRRKIQHK) has biased composition (basic residues). The segment at residues 122 to 188 (AAEALNSDVW…YTAEHNHPAP (67 aa)) is a DNA-binding region (WRKY). Over residues 190–220 (HRNSLAGSTRQKPSDQQTSKSPTTTIATYSS) the composition is skewed to polar residues.

The protein belongs to the WRKY group II-e family.

The protein resides in the nucleus. In terms of biological role, transcription factor involved in the expression of defense genes in innate immune response of plants. Interacts specifically with the W box (5'-(T)TGAC[CT]-3'), a frequently occurring elicitor-responsive cis-acting element. Activates WRKY 29, SIRK and its own promoters. In Arabidopsis thaliana (Mouse-ear cress), this protein is WRKY transcription factor 22 (WRKY22).